A 503-amino-acid chain; its full sequence is NAD(P)H-quinone oxidoreductase chain 4, chloroplastic (503 aa).

The next 13 helical transmembrane spans lie at 4 to 24, 37 to 57, 87 to 107, 134 to 154, 167 to 187, 208 to 228, 242 to 262, 272 to 292, 305 to 325, 330 to 350, 386 to 406, 416 to 436, and 462 to 482; these read FPWL…IFFL, ICIC…HFQL, IGPT…AWPV, LLLF…LLSM, FILY…GMGL, ALEI…SPII, HYST…YGLV, AHSI…IYAA, IAYS…SITD, GAIL…FLAG, LALP…GIIT, ILIT…SLSM, and LFVS…PDFV.

The protein belongs to the complex I subunit 4 family.

Its subcellular location is the plastid. It localises to the chloroplast thylakoid membrane. The enzyme catalyses a plastoquinone + NADH + (n+1) H(+)(in) = a plastoquinol + NAD(+) + n H(+)(out). The catalysed reaction is a plastoquinone + NADPH + (n+1) H(+)(in) = a plastoquinol + NADP(+) + n H(+)(out). In Drimys granadensis, this protein is NAD(P)H-quinone oxidoreductase chain 4, chloroplastic.